The chain runs to 623 residues: tRNA uridine 5-carboxymethylaminomethyl modification enzyme MnmG (623 aa).

Residues 11–16 (GAGHAG), Val-123, and Ser-178 each bind FAD. Position 270 to 284 (270 to 284 (GPRYCPSIETKIVTF)) interacts with NAD(+). Gln-367 is a binding site for FAD.

The protein belongs to the MnmG family. As to quaternary structure, homodimer. Heterotetramer of two MnmE and two MnmG subunits. FAD is required as a cofactor.

Its subcellular location is the cytoplasm. NAD-binding protein involved in the addition of a carboxymethylaminomethyl (cmnm) group at the wobble position (U34) of certain tRNAs, forming tRNA-cmnm(5)s(2)U34. The chain is tRNA uridine 5-carboxymethylaminomethyl modification enzyme MnmG from Phocaeicola vulgatus (strain ATCC 8482 / DSM 1447 / JCM 5826 / CCUG 4940 / NBRC 14291 / NCTC 11154) (Bacteroides vulgatus).